Here is a 310-residue protein sequence, read N- to C-terminus: Vomeronasal type-1 receptor 53 (310 aa).

The Extracellular portion of the chain corresponds to 1-20; sequence MNKANLLHTDINLKITLFSE. A helical transmembrane segment spans residues 21-41; that stretch reads VSVGISANSILIFAHLCMLLG. Residues 42-50 are Cytoplasmic-facing; that stretch reads ENRPKPIDL. A helical membrane pass occupies residues 51–71; it reads YIAFFSLTQLMLLITMGLIAV. Topologically, residues 72–93 are extracellular; it reads DMFMPWGRWDSTTCQSLIYLHR. C85 and C172 are oxidised to a cystine. The helical transmembrane segment at 94–114 threads the bilayer; it reads LLRGLTLSATCLLNVLWTITL. Topologically, residues 115-134 are cytoplasmic; that stretch reads SPRSSCLTKFKHKSLQHISC. A helical membrane pass occupies residues 135 to 155; the sequence is AFLFLCVLYMSFNSHLFISII. The Extracellular portion of the chain corresponds to 156-183; the sequence is AYPNLTLENFMYVTQSCSLIPLSYFRKS. N159 carries N-linked (GlcNAc...) asparagine glycosylation. Residues 184 to 204 form a helical membrane-spanning segment; the sequence is MFSIPMAIREALLIGLMALSG. Over 205-238 the chain is Cytoplasmic; it reads GYMVAHLWRHKKQAQHLHRTSLSSKASPEQRATR. A helical membrane pass occupies residues 239 to 259; sequence TIMLLMSFFVVLYILDLVIFH. The Extracellular portion of the chain corresponds to 260 to 268; that stretch reads SRMKFKDGS. A helical transmembrane segment spans residues 269–289; it reads ILYGVQIIVSHSYATVSPFVF. Residues 290–310 lie on the Cytoplasmic side of the membrane; it reads ICTEKRITNFLRSMCGRIVNI.

It belongs to the G-protein coupled receptor 1 family.

It localises to the cell membrane. Its function is as follows. Putative pheromone receptor implicated in the regulation of social and reproductive behavior. The polypeptide is Vomeronasal type-1 receptor 53 (Vmn1r53) (Mus musculus (Mouse)).